We begin with the raw amino-acid sequence, 596 residues long: Elongation factor 4 (596 aa).

The tr-type G domain maps to 2–183; sequence KNIRNFSIIA…AIVRRVPAPD (182 aa). GTP is bound by residues 14–19 and 130–133; these read DHGKST and NKID.

It belongs to the TRAFAC class translation factor GTPase superfamily. Classic translation factor GTPase family. LepA subfamily.

The protein resides in the cell inner membrane. The catalysed reaction is GTP + H2O = GDP + phosphate + H(+). Functionally, required for accurate and efficient protein synthesis under certain stress conditions. May act as a fidelity factor of the translation reaction, by catalyzing a one-codon backward translocation of tRNAs on improperly translocated ribosomes. Back-translocation proceeds from a post-translocation (POST) complex to a pre-translocation (PRE) complex, thus giving elongation factor G a second chance to translocate the tRNAs correctly. Binds to ribosomes in a GTP-dependent manner. The chain is Elongation factor 4 from Campylobacter curvus (strain 525.92).